The primary structure comprises 319 residues: Ribonuclease Z (319 aa).

7 residues coordinate Zn(2+): His-62, His-64, Asp-66, His-67, His-145, Asp-215, and His-273. Residue Asp-66 is the Proton acceptor of the active site.

This sequence belongs to the RNase Z family. As to quaternary structure, homodimer. Zn(2+) is required as a cofactor.

The enzyme catalyses Endonucleolytic cleavage of RNA, removing extra 3' nucleotides from tRNA precursor, generating 3' termini of tRNAs. A 3'-hydroxy group is left at the tRNA terminus and a 5'-phosphoryl group is left at the trailer molecule.. In terms of biological role, zinc phosphodiesterase, which displays some tRNA 3'-processing endonuclease activity. Probably involved in tRNA maturation, by removing a 3'-trailer from precursor tRNA. This chain is Ribonuclease Z, found in Borrelia hermsii (strain HS1 / DAH).